The following is a 106-amino-acid chain: Flagellar transcriptional regulator FlhD (106 aa).

This sequence belongs to the FlhD family. In terms of assembly, homodimer; disulfide-linked. Forms a heterohexamer composed of two FlhC and four FlhD subunits. Each FlhC binds a FlhD dimer, forming a heterotrimer, and a hexamer assembles by dimerization of two heterotrimers.

The protein localises to the cytoplasm. Functionally, functions in complex with FlhC as a master transcriptional regulator that regulates transcription of several flagellar and non-flagellar operons by binding to their promoter region. Activates expression of class 2 flagellar genes, including fliA, which is a flagellum-specific sigma factor that turns on the class 3 genes. Also regulates genes whose products function in a variety of physiological pathways. The polypeptide is Flagellar transcriptional regulator FlhD (Burkholderia mallei (strain SAVP1)).